We begin with the raw amino-acid sequence, 198 residues long: Glycerol-3-phosphate acyltransferase (198 aa).

Helical transmembrane passes span 1–21, 77–97, 111–131, 136–156, and 157–177; these read MTII…GFLF, HLFE…PIWL, MFIA…LIIL, IVSL…FLDI, and GVTN…VILK.

Belongs to the PlsY family. Probably interacts with PlsX.

Its subcellular location is the cell inner membrane. The catalysed reaction is an acyl phosphate + sn-glycerol 3-phosphate = a 1-acyl-sn-glycero-3-phosphate + phosphate. The protein operates within lipid metabolism; phospholipid metabolism. In terms of biological role, catalyzes the transfer of an acyl group from acyl-phosphate (acyl-PO(4)) to glycerol-3-phosphate (G3P) to form lysophosphatidic acid (LPA). This enzyme utilizes acyl-phosphate as fatty acyl donor, but not acyl-CoA or acyl-ACP. In Prochlorococcus marinus (strain MIT 9515), this protein is Glycerol-3-phosphate acyltransferase.